The following is a 199-amino-acid chain: Protein-methionine-sulfoxide reductase heme-binding subunit MsrQ (199 aa).

The next 5 helical transmembrane spans lie at 13–33 (VLLHLAGFLPLLWLILSVDQG), 79–99 (LLGLWCFFWATLHLVSYALLE), 120–140 (LGVISWLILLALAVTSPQIMM), 147–167 (WQKLHNFVYLVAILAPIHYLW), and 169–189 (VKTLSPQPILYALAALILLLF).

The protein belongs to the MsrQ family. In terms of assembly, heterodimer of a catalytic subunit (MsrP) and a heme-binding subunit (MsrQ). It depends on FMN as a cofactor. The cofactor is heme b.

It localises to the cell inner membrane. Part of the MsrPQ system that repairs oxidized periplasmic proteins containing methionine sulfoxide residues (Met-O), using respiratory chain electrons. Thus protects these proteins from oxidative-stress damage caused by reactive species of oxygen and chlorine generated by the host defense mechanisms. MsrPQ is essential for the maintenance of envelope integrity under bleach stress, rescuing a wide series of structurally unrelated periplasmic proteins from methionine oxidation. MsrQ provides electrons for reduction to the reductase catalytic subunit MsrP, using the quinone pool of the respiratory chain. This Pectobacterium carotovorum subsp. carotovorum (strain PC1) protein is Protein-methionine-sulfoxide reductase heme-binding subunit MsrQ.